Consider the following 1004-residue polypeptide: MAALHTTPDSPAAQLERAEDGSECDPDQEEEEEEEEKGEEVQEVEEEEEEIVVEEEEEGVAEVVQDAQVEAVAEVEVEADVEEEDVKEVLAEEECPALGTQERLSRGGDAKSPVLQEKGLQASRAPATPRDEDLEEEEEEEEDEDEDDLLTAGCQELVTFEDVAVYFSLEEWERLEADQRGLYQEVMQENYGILVSLGYPIPKPDLIFRLEQGEEPWVPDSPRPEEGDIVTGVYTGAWFWTDDIEDHEEEDDEDFLAEVAEEENEPPGLWSAAYGVGDVPGTWGPDDSDSAQTPEGWGPDPGGLGVLADGSEAKPFLPGREPGANLLSPWAFPAAVAPPAGRPETTCDVCGKVFPHRSRLAKHQRYHAAVKPFGCEECGKGFVYRSHLAIHQRTHTGEKPFPCPDCGKRFVYKSHLVTHRRIHTGERPYRCAFCGAGFGRRSYLVTHQRTHTGERPYPCSHCGRSFSQSSALARHQAVHTADRPHCCPDCGQAFRLRADFQRHRRGGGCAEAGGDGPRREPGETAAAAGPEDTDPGPEGSEVGEADGEAEAAAEEREEAAVAAPTPSGKVDPAPERRFLELGNGLGEGEGPSSHPLGFHFPVHPKSWLHPDSFPILGLPDFRERLPVDGRPLPAPLGGPLSLVEGTGLACDPFGGGGAAGGGGGLRAFGPAIGGLLAEPAPAALAEEESPWICSDCGKTFGRRAALAKHQRYHAGERPHRCADCGKSFVYGSHLARHRRTHTGERPFPCPECGARFARGSHLAAHVRGHTGEKPFVCGVCGAGFSRRAHLTAHGRAHTGERPYACGECGRRFGQSAALTRHQWAHAEEKPHRCPDCGKGFGHSSDFKRHRRTHTGEKPFRCADCGRGFAQRSNLAKHRRGHTGERPFPCPECGKRFSQRSVLVTHQRTHTGERPYACANCGRRFSQSSHLLTHMKTHRGATAAPGSGSAPAPAPKPEAAAKGPSSAGPGERGSALLEFAGGTSFGSEHQAAFAGPSGAYREGVL.

Positions 1-148 are disordered; it reads MAALHTTPDS…EEEEDEDEDD (148 aa). Alanine 2 bears the N-acetylalanine mark. Threonine 7 is modified (phosphothreonine). Serine 10 carries the phosphoserine modification. Residues 21–60 show a composition bias toward acidic residues; sequence GSECDPDQEEEEEEEEKGEEVQEVEEEEEEIVVEEEEEGV. Residues 61–72 are compositionally biased toward low complexity; it reads AEVVQDAQVEAV. Acidic residues predominate over residues 73–95; the sequence is AEVEVEADVEEEDVKEVLAEEEC. Serine 112 bears the Phosphoserine mark. Positions 132-148 are enriched in acidic residues; sequence EDLEEEEEEEEDEDEDD. One can recognise a KRAB domain in the interval 158 to 229; that stretch reads VTFEDVAVYF…DSPRPEEGDI (72 aa). 5 C2H2-type zinc fingers span residues 345–367, 373–395, 401–423, 429–451, and 457–479; these read TTCDVCGKVFPHRSRLAKHQRYH, FGCEECGKGFVYRSHLAIHQRTH, FPCPDCGKRFVYKSHLVTHRRIH, YRCAFCGAGFGRRSYLVTHQRTH, and YPCSHCGRSFSQSSALARHQAVH. A C2H2-type 6; degenerate zinc finger spans residues 485–512; it reads HCCPDCGQAFRLRADFQRHRRGGGCAEA. The disordered stretch occupies residues 508–574; that stretch reads GCAEAGGDGP…TPSGKVDPAP (67 aa). Residues 531–557 show a composition bias toward acidic residues; it reads EDTDPGPEGSEVGEADGEAEAAAEERE. C2H2-type zinc fingers lie at residues 691 to 713, 719 to 741, 747 to 769, 775 to 797, and 803 to 825; these read WICSDCGKTFGRRAALAKHQRYH, HRCADCGKSFVYGSHLARHRRTH, FPCPECGARFARGSHLAAHVRGH, FVCGVCGAGFSRRAHLTAHGRAH, and YACGECGRRFGQSAALTRHQWAH. Residue lysine 829 forms a Glycyl lysine isopeptide (Lys-Gly) (interchain with G-Cter in SUMO2) linkage. C2H2-type zinc fingers lie at residues 831–853, 859–881, 887–909, and 915–937; these read HRCPDCGKGFGHSSDFKRHRRTH, FRCADCGRGFAQRSNLAKHRRGH, FPCPECGKRFSQRSVLVTHQRTH, and YACANCGRRFSQSSHLLTHMKTH. Positions 936–976 are disordered; sequence THRGATAAPGSGSAPAPAPKPEAAAKGPSSAGPGERGSALL. Low complexity predominate over residues 939-968; the sequence is GATAAPGSGSAPAPAPKPEAAAKGPSSAGP. Lysine 955 is covalently cross-linked (Glycyl lysine isopeptide (Lys-Gly) (interchain with G-Cter in SUMO2)).

The protein belongs to the krueppel C2H2-type zinc-finger protein family.

The protein resides in the nucleus. Its function is as follows. May be involved in transcriptional regulation. The sequence is that of Zinc finger protein 316 (ZNF316) from Homo sapiens (Human).